The primary structure comprises 547 residues: Sodium-coupled neutral amino acid transporter 4 (547 aa).

Residues 1–104 (MDPIELRSVN…GLSYAMANTG (104 aa)) lie on the Extracellular side of the membrane. Phosphoserine is present on Ser-49. The chain crosses the membrane as a helical span at residues 105 to 125 (IVLFVIMLLTVAILSLYSVHL). The Cytoplasmic portion of the chain corresponds to 126 to 151 (LLKTAKEGGSLIYEKLGEKAFGWPGK). Residues 152–172 (IGAFISITMQNIGAMSSYLFI) form a helical membrane-spanning segment. The Extracellular portion of the chain corresponds to 173 to 195 (IKYELPEVIRVFMGLEENTGEWY). Residues 196 to 216 (LNGNYLVLFVSVGIILPLSLL) form a helical membrane-spanning segment. Over 217–220 (KNLG) the chain is Cytoplasmic. A helical transmembrane segment spans residues 221–241 (YLGYTSGFSLTCMVFFVSVVI). Topologically, residues 242 to 332 (YKKFQIPCPL…PKYFVFNSRT (91 aa)) are extracellular. The cysteines at positions 249 and 321 are disulfide-linked. 3 N-linked (GlcNAc...) asparagine glycosylation sites follow: Asn-260, Asn-264, and Asn-276. The chain crosses the membrane as a helical span at residues 333–353 (AYAIPILAFAFVCHPEVLPIY). Residues 354–369 (SELKDRSRRKMQTVSN) lie on the Cytoplasmic side of the membrane. A helical membrane pass occupies residues 370-390 (ISITGMLVMYLLAALFGYLSF). Topologically, residues 391-411 (YGEVEDELLHAYSKVYTFDTA) are extracellular. A helical membrane pass occupies residues 412–432 (LLMVRLAVLVAVTLTVPIVLF). Residues 433–453 (PIRTSVITLLFPRRPFSWVKH) are Cytoplasmic-facing. Residues 454–474 (FGIAAIIIALNNVLVILVPTI) traverse the membrane as a helical segment. The Extracellular portion of the chain corresponds to 475 to 476 (KY). Residues 477–497 (IFGFIGASSATMLIFILPAAF) form a helical membrane-spanning segment. Over 498-514 (YLKLVKKEPLRSPQKIG) the chain is Cytoplasmic. The helical transmembrane segment at 515-535 (ALVFLVTGIIFMMGSMALIII) threads the bilayer. Over 536–547 (DWIYNPPNPDHH) the chain is Extracellular.

The protein belongs to the amino acid/polyamine transporter 2 family. Post-translationally, the disulfide bond plays an important role in substrate transport, but has no effect on trafficking to the cell surface. In terms of tissue distribution, expressed predominantly in liver, and at lower level in skeletal muscle.

It is found in the cell membrane. Its subcellular location is the cell projection. It localises to the microvillus membrane. It carries out the reaction L-alanine(in) + Na(+)(in) = L-alanine(out) + Na(+)(out). The catalysed reaction is L-serine(in) + Na(+)(in) = L-serine(out) + Na(+)(out). The enzyme catalyses glycine(in) + Na(+)(in) = glycine(out) + Na(+)(out). It catalyses the reaction L-cysteine(in) + Na(+)(in) = L-cysteine(out) + Na(+)(out). It carries out the reaction L-asparagine(in) + Na(+)(in) = L-asparagine(out) + Na(+)(out). The catalysed reaction is L-threonine(in) + Na(+)(in) = L-threonine(out) + Na(+)(out). The enzyme catalyses L-proline(in) + Na(+)(in) = L-proline(out) + Na(+)(out). It catalyses the reaction L-methionine(in) + Na(+)(in) = L-methionine(out) + Na(+)(out). It carries out the reaction L-glutamine(in) + Na(+)(in) = L-glutamine(out) + Na(+)(out). The catalysed reaction is L-histidine(in) + Na(+)(in) = L-histidine(out) + Na(+)(out). Functionally, symporter that cotransports neutral amino acids and sodium ions from the extraccellular to the intracellular side of the cell membrane. The transport is electrogenic, pH dependent and partially tolerates substitution of Na(+) by Li(+). Preferentially transports smaller amino acids, such as glycine, L-alanine, L-serine, L-asparagine and L-threonine, followed by L-cysteine, L-histidine, L-proline and L-glutamine and L-methionine. This chain is Sodium-coupled neutral amino acid transporter 4, found in Rattus norvegicus (Rat).